The primary structure comprises 233 residues: Ion-translocating oxidoreductase complex subunit E (233 aa).

6 helical membrane-spanning segments follow: residues 18 to 38 (ALVQ…ATNA), 39 to 59 (LGLG…VSAL), 69 to 89 (IPIY…LINA), 92 to 112 (FGLY…CIVI), 128 to 148 (ALDG…LGAL), and 182 to 202 (PFLL…LLAG).

It belongs to the NqrDE/RnfAE family. The complex is composed of six subunits: RnfA, RnfB, RnfC, RnfD, RnfE and RnfG.

Its subcellular location is the cell inner membrane. Its function is as follows. Part of a membrane-bound complex that couples electron transfer with translocation of ions across the membrane. The polypeptide is Ion-translocating oxidoreductase complex subunit E (Yersinia pseudotuberculosis serotype O:1b (strain IP 31758)).